Consider the following 2275-residue polypeptide: Serine-rich adhesin for platelets (2275 aa).

Residues 1–89 (MSKRQKEFHD…VNMLHDQQAF (89 aa)) form the signal peptide. The segment at 90–230 (AASDAPLTSE…KTSTTSTSTA (141 aa)) is serine-rich repeat region 1, SRR1. Residues 100 to 111 (LNTQSETVGNQN) are compositionally biased toward polar residues. Disordered stretches follow at residues 100–229 (LNTQ…STST) and 751–2247 (NSMS…GLLG). Positions 112–128 (STTIEASTSTADSTSVT) are enriched in low complexity. Residues 129–140 (KNSSSVQTSNSD) are compositionally biased toward polar residues. A compositionally biased stretch (low complexity) spans 150 to 229 (VTSTTNSTSN…NKTSTTSTST (80 aa)). A non-repeat region (NRR) region spans residues 231-751 (PVKLRTFSRL…TTFKYEVTRN (521 aa)). Composition is skewed to low complexity over residues 752 to 1392 (SMSD…LSLS) and 1402 to 2218 (SNSA…ATSE). The serine-rich repeat region 2, SRR2 stretch occupies residues 752–2236 (SMSDSVSTSG…AQSEKRLPDT (1485 aa)). Residues 2233–2237 (LPDTG) carry the LPXTG sorting signal motif. Threonine 2236 carries the pentaglycyl murein peptidoglycan amidated threonine modification. Residues 2237 to 2275 (GDSIKQNGLLGGVMTLLVGLGLMKRKKKKDENDQDDSQA) constitute a propeptide, removed by sortase.

This sequence belongs to the serine-rich repeat protein (SRRP) family. In terms of processing, proteolytically cleaved by a metalloprotease. Glycosylated. It is probable that most of the Ser residues in SSR1 and SSR2 are O-GlcNAcylated. Sequential glycosylation by sugar transferases are able to generate complex sugar polymorphisms.

It localises to the secreted. It is found in the cell wall. Its function is as follows. Mediates binding to human platelets, possibly through a receptor-ligand interaction. Probably associated with virulence in endovascular infection. This is Serine-rich adhesin for platelets (sraP) from Staphylococcus aureus (strain MSSA476).